The chain runs to 371 residues: Probable palmitoyltransferase ZDHHC11B (371 aa).

Transmembrane regions (helical) follow at residues 43–63 and 70–90; these read VVTWAVFVGLSLATFRIFIPL and YIAYVVTGGIFSFHLVVHLIA. The DHHC domain occupies 125–175; it reads QFCHLCKVTVNKKTKHCISCNKCVSGFDHHCKWINNCVGSRNYWFFFSTVA. Cys155 serves as the catalytic S-palmitoyl cysteine intermediate. The next 3 membrane-spanning stretches (helical) occupy residues 177 to 197, 216 to 236, and 239 to 259; these read ATAGMLCLIAILLYVLVQYLV, TWLLFLPLFPVQVQTLIVVII, and LVLLLDLLGLVQLGQLLIFHI. The interval 335–371 is disordered; it reads DGDSKAQEADDAPSTSTLGLQQETTEPMKTDSAESED. The segment covering 347-359 has biased composition (polar residues); sequence PSTSTLGLQQETT. Residues 360-371 are compositionally biased toward basic and acidic residues; that stretch reads EPMKTDSAESED.

Belongs to the DHHC palmitoyltransferase family.

Its subcellular location is the membrane. The catalysed reaction is L-cysteinyl-[protein] + hexadecanoyl-CoA = S-hexadecanoyl-L-cysteinyl-[protein] + CoA. In terms of biological role, probable palmitoyltransferase that could catalyze the addition of palmitate onto various protein substrates and be involved in a variety of cellular processes. May play a role in cell proliferation. This Homo sapiens (Human) protein is Probable palmitoyltransferase ZDHHC11B.